A 375-amino-acid chain; its full sequence is MRAQGDRYIGIMSGTSMDGADAVLVDFSGERPAVLAAAHEPFPDALRADFGQLQQPGDNEIHREALAANALARVYAGCVTTLLGQAGLQAGDVAAIGAHGQTIRHRPGLYDEIGYTRQSQHPALLAELAGIDVVADFRSRDVAAGGQGAPLVPALHQALFGDGAEARVVCNIGGISNISVLPGDSGAVIGFDCGPGNALLDYWIGEQLGMPYDDDGAWAASGRVDEALLAACLADPYFNAAPPKSTGRDLFHPAWLEARLATRSGPALSPADVQATLAALTAEAIARDVRAHAAPAKRLIVCGGGARNGYIMRRLAQALPGVAVQTTEDFGVPVSQVEAIAFAWLARQCLLRLPGNVATVTGAAGPRVLGAIYPR.

Position 14–21 (14–21 (GTSMDGAD)) interacts with ATP.

Belongs to the anhydro-N-acetylmuramic acid kinase family.

The enzyme catalyses 1,6-anhydro-N-acetyl-beta-muramate + ATP + H2O = N-acetyl-D-muramate 6-phosphate + ADP + H(+). Its pathway is amino-sugar metabolism; 1,6-anhydro-N-acetylmuramate degradation. The protein operates within cell wall biogenesis; peptidoglycan recycling. Its function is as follows. Catalyzes the specific phosphorylation of 1,6-anhydro-N-acetylmuramic acid (anhMurNAc) with the simultaneous cleavage of the 1,6-anhydro ring, generating MurNAc-6-P. Is required for the utilization of anhMurNAc either imported from the medium or derived from its own cell wall murein, and thus plays a role in cell wall recycling. The chain is Anhydro-N-acetylmuramic acid kinase from Cupriavidus pinatubonensis (strain JMP 134 / LMG 1197) (Cupriavidus necator (strain JMP 134)).